Reading from the N-terminus, the 583-residue chain is Chromosomal replication initiator protein DnaA (583 aa).

The tract at residues M1–M91 is domain I, interacts with DnaA modulators. 2 disordered regions span residues P86 to V179 and V197 to D232. Residues M91–T235 are domain II. Polar residues predominate over residues E97–D106. Composition is skewed to basic and acidic residues over residues E126 to A135 and Q147 to P174. Over residues A205–V226 the composition is skewed to polar residues. The domain III, AAA+ region stretch occupies residues H236–A460. ATP contacts are provided by G280, G282, K283, and T284. The interval S461 to D583 is domain IV, binds dsDNA.

Belongs to the DnaA family. In terms of assembly, oligomerizes as a right-handed, spiral filament on DNA at oriC.

Its subcellular location is the cytoplasm. Functionally, plays an essential role in the initiation and regulation of chromosomal replication. ATP-DnaA binds to the origin of replication (oriC) to initiate formation of the DNA replication initiation complex once per cell cycle. Binds the DnaA box (a 9 base pair repeat at the origin) and separates the double-stranded (ds)DNA. Forms a right-handed helical filament on oriC DNA; dsDNA binds to the exterior of the filament while single-stranded (ss)DNA is stabiized in the filament's interior. The ATP-DnaA-oriC complex binds and stabilizes one strand of the AT-rich DNA unwinding element (DUE), permitting loading of DNA polymerase. After initiation quickly degrades to an ADP-DnaA complex that is not apt for DNA replication. Binds acidic phospholipids. This chain is Chromosomal replication initiator protein DnaA, found in Bifidobacterium animalis subsp. lactis (strain AD011).